Reading from the N-terminus, the 347-residue chain is ATP-dependent (S)-NAD(P)H-hydrate dehydratase (347 aa).

The YjeF C-terminal domain occupies 53–344 (TLQLVRNIIP…AEVGAAFSKL (292 aa)). Phosphotyrosine is present on Y85. (6S)-NADPHX contacts are provided by residues G153 and 206–212 (NHVEFSR). An N-linked (GlcNAc...) asparagine glycan is attached at N240. ATP is bound by residues 246–250 (KGERD) and 265–274 (GSSRRCGGQG). Residue D275 coordinates (6S)-NADPHX. A glycan (N-linked (GlcNAc...) asparagine) is linked at N297.

It belongs to the NnrD/CARKD family. It depends on Mg(2+) as a cofactor.

Its subcellular location is the mitochondrion. It catalyses the reaction (6S)-NADHX + ATP = ADP + phosphate + NADH + H(+). The catalysed reaction is (6S)-NADPHX + ATP = ADP + phosphate + NADPH + H(+). Functionally, catalyzes the dehydration of the S-form of NAD(P)HX at the expense of ATP, which is converted to ADP. Together with NAD(P)HX epimerase, which catalyzes the epimerization of the S- and R-forms, the enzyme allows the repair of both epimers of NAD(P)HX, a damaged form of NAD(P)H that is a result of enzymatic or heat-dependent hydration. This is ATP-dependent (S)-NAD(P)H-hydrate dehydratase from Homo sapiens (Human).